The sequence spans 513 residues: Maturase K (513 aa).

This sequence belongs to the intron maturase 2 family. MatK subfamily.

The protein localises to the plastid. It is found in the chloroplast. Its function is as follows. Usually encoded in the trnK tRNA gene intron. Probably assists in splicing its own and other chloroplast group II introns. The chain is Maturase K from Zea mays (Maize).